The sequence spans 752 residues: Photosystem I P700 chlorophyll a apoprotein A1 (752 aa).

8 helical membrane-spanning segments follow: residues 73-96 (IFSA…FHGA), 159-182 (LYVT…FHYH), 198-222 (LNHH…HVSL), 294-312 (IAHH…GHMY), 349-372 (WHAN…HHMY), 388-414 (LSLF…IFMI), 436-458 (ALIS…LYIH), and 533-551 (FMVH…LILL). [4Fe-4S] cluster contacts are provided by cysteine 575 and cysteine 584. 2 helical membrane-spanning segments follow: residues 591 to 612 (HVFL…HFSW) and 666 to 688 (ISAY…MFLF). Histidine 677 is a binding site for chlorophyll a'. The chlorophyll a site is built by methionine 685 and tyrosine 693. Phylloquinone is bound at residue tryptophan 694. Residues 726 to 746 (AVGAAHYLLGGIATTWAFFLS) traverse the membrane as a helical segment.

It belongs to the PsaA/PsaB family. As to quaternary structure, the PsaA/B heterodimer binds the P700 chlorophyll special pair and subsequent electron acceptors. PSI consists of a core antenna complex that captures photons, and an electron transfer chain that converts photonic excitation into a charge separation. The eukaryotic PSI reaction center is composed of at least 11 subunits. P700 is a chlorophyll a/chlorophyll a' dimer, A0 is one or more chlorophyll a, A1 is one or both phylloquinones and FX is a shared 4Fe-4S iron-sulfur center. serves as cofactor.

Its subcellular location is the plastid. The protein localises to the chloroplast thylakoid membrane. It catalyses the reaction reduced [plastocyanin] + hnu + oxidized [2Fe-2S]-[ferredoxin] = oxidized [plastocyanin] + reduced [2Fe-2S]-[ferredoxin]. Its function is as follows. PsaA and PsaB bind P700, the primary electron donor of photosystem I (PSI), as well as the electron acceptors A0, A1 and FX. PSI is a plastocyanin/cytochrome c6-ferredoxin oxidoreductase, converting photonic excitation into a charge separation, which transfers an electron from the donor P700 chlorophyll pair to the spectroscopically characterized acceptors A0, A1, FX, FA and FB in turn. Oxidized P700 is reduced on the lumenal side of the thylakoid membrane by plastocyanin or cytochrome c6. This chain is Photosystem I P700 chlorophyll a apoprotein A1, found in Cyanidium caldarium (Red alga).